We begin with the raw amino-acid sequence, 387 residues long: 3-ketoacyl-CoA thiolase (387 aa).

The Acyl-thioester intermediate role is filled by Cys91. Active-site proton acceptor residues include His343 and Cys373.

It belongs to the thiolase-like superfamily. Thiolase family. As to quaternary structure, heterotetramer of two alpha chains (FadB) and two beta chains (FadA).

Its subcellular location is the cytoplasm. The enzyme catalyses an acyl-CoA + acetyl-CoA = a 3-oxoacyl-CoA + CoA. Its pathway is lipid metabolism; fatty acid beta-oxidation. Catalyzes the final step of fatty acid oxidation in which acetyl-CoA is released and the CoA ester of a fatty acid two carbons shorter is formed. This chain is 3-ketoacyl-CoA thiolase, found in Escherichia coli O9:H4 (strain HS).